Here is a 65-residue protein sequence, read N- to C-terminus: Weak toxin CM-11 (65 aa).

5 disulfides stabilise this stretch: cysteine 3/cysteine 24, cysteine 6/cysteine 11, cysteine 17/cysteine 42, cysteine 46/cysteine 57, and cysteine 58/cysteine 63.

Belongs to the three-finger toxin family. Ancestral subfamily. Orphan group II sub-subfamily. Expressed by the venom gland.

It localises to the secreted. Its function is as follows. Binds with low affinity to muscular (alpha-1-beta-1-delta-epsilon/CHRNA1-CHRNB1-CHRND-CHRNE) and very low affinity to neuronal (alpha-7/CHRNA7) nicotinic acetylcholine receptor (nAChR). The protein is Weak toxin CM-11 of Naja haje haje (Egyptian cobra).